The following is a 184-amino-acid chain: Putative lyase MJ0807 (184 aa).

The protein belongs to the chorismate pyruvate-lyase type 2 family.

In Methanocaldococcus jannaschii (strain ATCC 43067 / DSM 2661 / JAL-1 / JCM 10045 / NBRC 100440) (Methanococcus jannaschii), this protein is Putative lyase MJ0807.